A 352-amino-acid polypeptide reads, in one-letter code: MKVSVIIPTYNERENLEELFSRIDNALQGLNYEIVVVDDDSPDRTWEKAQELSSKYPVKVIRRTKEKGLSSAVIRGFKEASGDVFVVMDADLQHPPEVIPKLIEAIKNGSDIAIGSRYVKGGKVENWPFYRKLISKGAIMVGRIALPKIRDIKDPVSGFFALRKEVVEGVELNPIGFKILMEILIKGKYSKVVEVPFTFGIRARGESKLKGKTIFEYLRHIYRLMKWEGEIDRIVKFSIVGLSGILVNEGFLWLFVNLGIPKEIAVIPAVELSILNNFFWNDIWTFKDIRRGSIFSRLLKFHIAALSGAVVNFIVYWILLFLGIHYLIANLVGIVLSFGVRYVINRHVTWAT.

Residues 1–229 lie on the Cytoplasmic side of the membrane; that stretch reads MKVSVIIPTY…HIYRLMKWEG (229 aa). GDP-alpha-D-mannose is bound by residues P8, Y10, E12, V37, D39, D89, A90, D91, Q93, R117, V156, K178, R202, and K208. The Mg(2+) site is built by D91 and Q93. The Mn(2+) site is built by D91 and Q93. Residues 230–256 form a helical membrane-spanning segment; that stretch reads EIDRIVKFSIVGLSGILVNEGFLWLFV. Residues 257 to 261 are Extracellular-facing; that stretch reads NLGIP. A helical membrane pass occupies residues 262–286; it reads KEIAVIPAVELSILNNFFWNDIWTF. Residues 287–293 lie on the Cytoplasmic side of the membrane; sequence KDIRRGS. Residues 294-320 traverse the membrane as a helical segment; sequence IFSRLLKFHIAALSGAVVNFIVYWILL. Topologically, residues 321-325 are extracellular; sequence FLGIH. The chain crosses the membrane as a helical span at residues 326–350; it reads YLIANLVGIVLSFGVRYVINRHVTW. Residues 351-352 are Cytoplasmic-facing; the sequence is AT.

Belongs to the glycosyltransferase 2 family. Mg(2+) serves as cofactor. It depends on Mn(2+) as a cofactor. Ca(2+) is required as a cofactor.

It is found in the cell membrane. The enzyme catalyses a di-trans,poly-cis-dolichyl phosphate + GDP-alpha-D-mannose = a di-trans,poly-cis-dolichyl beta-D-mannosyl phosphate + GDP. It functions in the pathway protein modification; protein glycosylation. Functionally, transfers mannose from GDP-mannose to dolichol monophosphate to form dolichol phosphate mannose (Dol-P-Man) which is the mannosyl donor in pathways leading to N-glycosylation, glycosyl phosphatidylinositol membrane anchoring, and O-mannosylation of proteins. The sequence is that of Dolichol-phosphate mannosyltransferase from Pyrococcus furiosus (strain ATCC 43587 / DSM 3638 / JCM 8422 / Vc1).